A 360-amino-acid chain; its full sequence is uncharacterized protein (360 aa).

In terms of domain architecture, 4Fe-4S ferredoxin-type spans 11–40 (KEEVWDTNRCSGCGACVAVCPVNNLYFREE).

The protein belongs to the FrhB family.

This is an uncharacterized protein from Methanocaldococcus jannaschii (strain ATCC 43067 / DSM 2661 / JAL-1 / JCM 10045 / NBRC 100440) (Methanococcus jannaschii).